Here is a 273-residue protein sequence, read N- to C-terminus: Putative pyruvate, phosphate dikinase regulatory protein (273 aa).

153–160 contacts ADP; sequence GISRTSKT.

It belongs to the pyruvate, phosphate/water dikinase regulatory protein family. PDRP subfamily.

The enzyme catalyses N(tele)-phospho-L-histidyl/L-threonyl-[pyruvate, phosphate dikinase] + ADP = N(tele)-phospho-L-histidyl/O-phospho-L-threonyl-[pyruvate, phosphate dikinase] + AMP + H(+). The catalysed reaction is N(tele)-phospho-L-histidyl/O-phospho-L-threonyl-[pyruvate, phosphate dikinase] + phosphate + H(+) = N(tele)-phospho-L-histidyl/L-threonyl-[pyruvate, phosphate dikinase] + diphosphate. Bifunctional serine/threonine kinase and phosphorylase involved in the regulation of the pyruvate, phosphate dikinase (PPDK) by catalyzing its phosphorylation/dephosphorylation. The sequence is that of Putative pyruvate, phosphate dikinase regulatory protein from Rhizobium etli (strain ATCC 51251 / DSM 11541 / JCM 21823 / NBRC 15573 / CFN 42).